Reading from the N-terminus, the 259-residue chain is 5'-nucleotidase SurE (259 aa).

D8, D9, S41, and N100 together coordinate a divalent metal cation.

This sequence belongs to the SurE nucleotidase family. The cofactor is a divalent metal cation.

It is found in the cytoplasm. It catalyses the reaction a ribonucleoside 5'-phosphate + H2O = a ribonucleoside + phosphate. Nucleotidase that shows phosphatase activity on nucleoside 5'-monophosphates. This chain is 5'-nucleotidase SurE, found in Natranaerobius thermophilus (strain ATCC BAA-1301 / DSM 18059 / JW/NM-WN-LF).